The sequence spans 298 residues: tRNA dimethylallyltransferase (298 aa).

Residue glycine 16 to serine 23 coordinates ATP. Threonine 18–serine 23 is a substrate binding site. 2 interaction with substrate tRNA regions span residues aspartate 41–glutamine 44 and glutamine 165–arginine 169.

Belongs to the IPP transferase family. As to quaternary structure, monomer. Requires Mg(2+) as cofactor.

The enzyme catalyses adenosine(37) in tRNA + dimethylallyl diphosphate = N(6)-dimethylallyladenosine(37) in tRNA + diphosphate. Functionally, catalyzes the transfer of a dimethylallyl group onto the adenine at position 37 in tRNAs that read codons beginning with uridine, leading to the formation of N6-(dimethylallyl)adenosine (i(6)A). In Rhizobium radiobacter (Agrobacterium tumefaciens), this protein is tRNA dimethylallyltransferase.